The primary structure comprises 240 residues: Alkaline phosphatase synthesis transcriptional regulatory protein PhoP (240 aa).

In terms of domain architecture, Response regulatory spans 4–118 (KILVVDDEES…EVNARVKAIL (115 aa)). Aspartate 53 bears the 4-aspartylphosphate mark. Positions 136 to 235 (EGQIVIGDLK…IRGLGYKLEE (100 aa)) form a DNA-binding region, ompR/PhoB-type.

Post-translationally, phosphorylated by PhoR.

It is found in the cytoplasm. Member of the two-component regulatory system PhoP/PhoR involved in the regulation of alkaline phosphatase genes phoA and phoB and of phosphodiesterase. This is Alkaline phosphatase synthesis transcriptional regulatory protein PhoP (phoP) from Bacillus subtilis (strain 168).